We begin with the raw amino-acid sequence, 356 residues long: MSRANPPSNSSGSRKISFNVSEQYDIQDVVGEGAYGVVCSAIHKPSGQKVAIKKITPFDHSMFCLRTLREMKLLRYFNHENIISILDIQKPRSYETFNEVYLIQELMETDMHRVIRTQDLSDDHCQYFIYQTLRALKAMHSANVLHRDLKPSNLLLNANCDLKVCDFGLARSAASQENNSGFMTEYVATRWYRAPEIMLTFKEYTKAIDVWSVGCILAEMLSGKPLFPGKDYHHQLTLILDVLGTPTMEDYYGIKSRRAREYIRSLPFKKKVPFRTLFPKTSDLALDLLEKLLAFNPVKRITVEEALKHPYLEPYHDPDDEPTAPPIPEEFFDFDKHKDNLSKEQLKQFIYQEIMR.

The Protein kinase domain occupies 24 to 312 (YDIQDVVGEG…VEEALKHPYL (289 aa)). ATP-binding positions include 30–38 (VGEGAYGVV) and lysine 53.

This sequence belongs to the protein kinase superfamily. CMGC Ser/Thr protein kinase family. MAP kinase subfamily. The cofactor is Mg(2+). Post-translationally, phosphorylated by MST7.

The catalysed reaction is L-seryl-[protein] + ATP = O-phospho-L-seryl-[protein] + ADP + H(+). The enzyme catalyses L-threonyl-[protein] + ATP = O-phospho-L-threonyl-[protein] + ADP + H(+). Functionally, mitogen-activated protein kinase; part of the MST11-MST7-PMK1 MAP kinase (MAPK) cascade that is essential for appressorium formation, penetration and invasive growth. Central regulator of appressorium development that acts downstream of the cAMP signal. The MST11-MST7-PMK1 MAP kinase cascade transduces signals from the cell surface sensors MDB2 and SHO1 that recognize various surface signals such as surface hydrophobicity, cutin monomers, and rice leaf waxes. Regulates expression of secreted fungal effector proteins implicated of host immune defenses, preventing reactive oxygen species generation and excessive callose deposition at plasmodesmata. Furthermore, controls the hyphal constriction required for fungal growth from one rice cell to the neighboring cell, enabling host tissue colonization and blast disease. Targets downstream of the PMK1-MAPK pathway include transcription factor MST12 and pathogenicity-related genes GAS1 and GAS2, both of which are expressed during appressorium formation, even if regulation of MST12 is not associated with expression of GAS1 or GAS2. This Pyricularia oryzae (Rice blast fungus) protein is Mitogen-activated protein kinase PMK1.